The chain runs to 185 residues: Ribosome-recycling factor (185 aa).

This sequence belongs to the RRF family.

Its subcellular location is the cytoplasm. In terms of biological role, responsible for the release of ribosomes from messenger RNA at the termination of protein biosynthesis. May increase the efficiency of translation by recycling ribosomes from one round of translation to another. The polypeptide is Ribosome-recycling factor (Pseudomonas savastanoi pv. phaseolicola (strain 1448A / Race 6) (Pseudomonas syringae pv. phaseolicola (strain 1448A / Race 6))).